The following is a 190-amino-acid chain: Lipid A acyltransferase PagP (190 aa).

The signal sequence occupies residues 1–24 (MNRYLLTTLSAPLLALFFSFSLQA). Catalysis depends on residues histidine 62, aspartate 105, and serine 106.

This sequence belongs to the lipid A palmitoyltransferase family. Homodimer.

The protein localises to the cell outer membrane. It catalyses the reaction a lipid A + a 1,2-diacyl-sn-glycero-3-phosphocholine = a hepta-acyl lipid A + a 2-acyl-sn-glycero-3-phosphocholine. It carries out the reaction a lipid IVA + a 1,2-diacyl-sn-glycero-3-phosphocholine = a lipid IVB + a 2-acyl-sn-glycero-3-phosphocholine. The enzyme catalyses a lipid IIA + a 1,2-diacyl-sn-glycero-3-phosphocholine = a lipid IIB + a 2-acyl-sn-glycero-3-phosphocholine. Its function is as follows. Transfers a fatty acid residue from the sn-1 position of a phospholipid to the N-linked hydroxyfatty acid chain on the proximal unit of lipid A or its precursors. The chain is Lipid A acyltransferase PagP from Pantoea ananatis (strain LMG 20103).